The chain runs to 69 residues: uncharacterized protein (69 aa).

This is an uncharacterized protein from Salmonella paratyphi A (strain ATCC 9150 / SARB42).